The following is a 132-amino-acid chain: UPF0299 membrane protein KPN78578_25390 (132 aa).

Helical transmembrane passes span 5 to 25 (LTII…LYAG), 38 to 60 (GSII…PQWV), 66 to 86 (ILIR…MQYW), and 93 to 113 (LGPV…VVSW).

Belongs to the UPF0299 family.

The protein resides in the cell inner membrane. The sequence is that of UPF0299 membrane protein KPN78578_25390 from Klebsiella pneumoniae subsp. pneumoniae (strain ATCC 700721 / MGH 78578).